The following is a 338-amino-acid chain: Solute carrier family 35 member G4 (338 aa).

Residues 1-29 (MAGSHPYFNLPDSTHPSPPSTPPSLHWHQ) are disordered. The next 7 helical transmembrane spans lie at 37–57 (TNGL…VGPL), 160–180 (CGLL…LWTL), 190–210 (GLGY…LLVY), 221–241 (TVAF…LFVL), 250–270 (LLSW…FTCV), 281–301 (LVCA…YFML), and 305–325 (VAPS…IITA). Positions 49-174 (LPAGFVGPLS…SILGLIIIVG (126 aa)) constitute an EamA 1 domain. Residues 272-325 (YAVTKAHPALVCAVLHSEVVMALILQYFMLHETVAPSDIMGAGVVLGSIAIITA) form the EamA 2 domain.

Belongs to the SLC35G solute transporter family.

It localises to the membrane. The polypeptide is Solute carrier family 35 member G4 (SLC35G4) (Homo sapiens (Human)).